We begin with the raw amino-acid sequence, 213 residues long: Pyridoxine/pyridoxamine 5'-phosphate oxidase (213 aa).

Residues 8–11 (RKNY) and Lys66 each bind substrate. Residues 61–66 (RIVLIK), 76–77 (FT), Arg82, Lys83, and Gln105 contribute to the FMN site. Tyr123, Arg127, and Ser131 together coordinate substrate. Residues 140-141 (QS) and Trp184 contribute to the FMN site. 190–192 (RLH) is a substrate binding site. Position 194 (Arg194) interacts with FMN.

Belongs to the pyridoxamine 5'-phosphate oxidase family. Homodimer. FMN serves as cofactor.

The enzyme catalyses pyridoxamine 5'-phosphate + O2 + H2O = pyridoxal 5'-phosphate + H2O2 + NH4(+). It carries out the reaction pyridoxine 5'-phosphate + O2 = pyridoxal 5'-phosphate + H2O2. It functions in the pathway cofactor metabolism; pyridoxal 5'-phosphate salvage; pyridoxal 5'-phosphate from pyridoxamine 5'-phosphate: step 1/1. It participates in cofactor metabolism; pyridoxal 5'-phosphate salvage; pyridoxal 5'-phosphate from pyridoxine 5'-phosphate: step 1/1. In terms of biological role, catalyzes the oxidation of either pyridoxine 5'-phosphate (PNP) or pyridoxamine 5'-phosphate (PMP) into pyridoxal 5'-phosphate (PLP). This chain is Pyridoxine/pyridoxamine 5'-phosphate oxidase, found in Paraburkholderia xenovorans (strain LB400).